Here is a 427-residue protein sequence, read N- to C-terminus: MSRNAELFERASRSIPGGVNSPVRAFRSVGGTPRFIKRALGPHIWDADGKQYIDYLGSWGPAILGHAHPEVVRAVQDAATGGLSFGAPTEAEVELAELLIQRLPSMEQVRLVSSGTEATMTAIRLARGATGRNKIIKFEGCYHGHSDSLLVKAGSGLLTLGNPSSAGVPPEFVAHTITLDYNNLPAVQTAFAEHGRDIACVIVEPVAGNMNLIKPAAGFLEGLRELCTRHGSVLIFDEVMTGFRVGPQGVQGLTGITPDLTTLAKVIGGGMPVGAFGGRADLMRHIAPLGSVYQAGTLSGNPVAVAAGLATLRLIGQPGFYEDLSARTQRLALGLTERAHAAGVTFSADAIGGMFGLYFRDKVPTSFAEVQTSNTEAFKRFFHAMLDRGVHFAPSAFEAGFVSAAHDDATLQATLDHAEAAFALLKA.

An N6-(pyridoxal phosphate)lysine modification is found at Lys265.

This sequence belongs to the class-III pyridoxal-phosphate-dependent aminotransferase family. HemL subfamily. As to quaternary structure, homodimer. Pyridoxal 5'-phosphate is required as a cofactor.

It is found in the cytoplasm. It catalyses the reaction (S)-4-amino-5-oxopentanoate = 5-aminolevulinate. The protein operates within porphyrin-containing compound metabolism; protoporphyrin-IX biosynthesis; 5-aminolevulinate from L-glutamyl-tRNA(Glu): step 2/2. This chain is Glutamate-1-semialdehyde 2,1-aminomutase, found in Bordetella avium (strain 197N).